The following is a 952-amino-acid chain: UvrABC system protein A (952 aa).

ATP is bound at residue 31–38 (GVSGSGKS). The C4-type zinc-finger motif lies at 253 to 280 (CPEHGSVLEELEPRIFSFNSPYGACPAC). ABC transporter domains lie at 309 to 591 (WSRG…PQSL) and 611 to 938 (GNGK…AFLA). 643–650 (GPSGSGKS) serves as a coordination point for ATP. The C4-type zinc-finger motif lies at 742–768 (CEACGGDGTVKIEMLFLPDLYVPCEVC).

This sequence belongs to the ABC transporter superfamily. UvrA family. Forms a heterotetramer with UvrB during the search for lesions.

The protein resides in the cytoplasm. Its function is as follows. The UvrABC repair system catalyzes the recognition and processing of DNA lesions. UvrA is an ATPase and a DNA-binding protein. A damage recognition complex composed of 2 UvrA and 2 UvrB subunits scans DNA for abnormalities. When the presence of a lesion has been verified by UvrB, the UvrA molecules dissociate. This is UvrABC system protein A from Thermus thermophilus (strain ATCC 27634 / DSM 579 / HB8).